We begin with the raw amino-acid sequence, 549 residues long: Solute carrier family 22 member 6 (549 aa).

Over 1-23 (MAFNDLLLQLGGVGRFQKIQVTL) the chain is Cytoplasmic. The helical transmembrane segment at 24–44 (VILPLILLASHNTLQNFTAAI) threads the bilayer. At 45 to 135 (PTHHCRPPAD…LVCSHRALRQ (91 aa)) the chain is on the extracellular side. N-linked (GlcNAc...) asparagine glycosylation is found at asparagine 56, asparagine 92, and asparagine 113. Residues 136 to 156 (LAQSLYMMGVLLGAMTFGCLA) traverse the membrane as a helical segment. Topologically, residues 157-164 (DRLGRRKV) are cytoplasmic. The chain crosses the membrane as a helical span at residues 165-185 (LIFNYLQTAVSGTCAAFAPNF). Residues 186–195 (PAYCAFRFLS) lie on the Extracellular side of the membrane. The helical transmembrane segment at 196-216 (GMSTAGVVLNCMTLNVEWMPI) threads the bilayer. The Cytoplasmic segment spans residues 217-224 (HTRAYVGT). The chain crosses the membrane as a helical span at residues 225–245 (LTGYVYSLGQFLLAGMAYAVP). The Extracellular segment spans residues 246–248 (HWR). A helical transmembrane segment spans residues 249–269 (YLQLLVSAPFFAFFIYSWFFI). The Cytoplasmic segment spans residues 270 to 337 (ESARWYASSG…ELIRCPALRR (68 aa)). The chain crosses the membrane as a helical span at residues 338–358 (LFLCLSMLWFATSFAYYGLVM). Residues 359 to 368 (DLQGFGVSIY) lie on the Extracellular side of the membrane. Residues 369–389 (LIQVIFGAVDLPAKLVSFLVI) form a helical membrane-spanning segment. The Cytoplasmic segment spans residues 390–395 (NNVGRR). Residues 396–416 (PAQMASLLLAGICILINGVVP) form a helical membrane-spanning segment. Residues 417-425 (KDKSIVRTS) lie on the Extracellular side of the membrane. The chain crosses the membrane as a helical span at residues 426-446 (LAVLGKGCLASSFNCIFLYTG). Residues 447-456 (EVYPTMIRQT) lie on the Cytoplasmic side of the membrane. Residues 457–477 (GLGMGSTLARVGSIVSPLVSM) traverse the membrane as a helical segment. Residues 478–484 (TAELYPS) are Extracellular-facing. A helical membrane pass occupies residues 485-505 (VPLFIYGAVPVAASAAIALLP). Residues 506–549 (ETLGQPLPDTVQDVENRRRGKTRKQQEELQKQMVPLQASAQVKN) lie on the Cytoplasmic side of the membrane. The tract at residues 521-549 (NRRRGKTRKQQEELQKQMVPLQASAQVKN) is disordered.

Belongs to the major facilitator (TC 2.A.1) superfamily. Organic cation transporter (TC 2.A.1.19) family. In terms of processing, glycosylated. Glycosylation is necessary for proper targeting of the transporter to the plasma membrane.

The protein localises to the basolateral cell membrane. It localises to the basal cell membrane. The enzyme catalyses (6R)-L-erythro-5,6,7,8-tetrahydrobiopterin(out) + a dicarboxylate(in) = (6R)-L-erythro-5,6,7,8-tetrahydrobiopterin(in) + a dicarboxylate(out). It carries out the reaction L-erythro-7,8-dihydrobiopterin(out) + a dicarboxylate(in) = L-erythro-7,8-dihydrobiopterin(in) + a dicarboxylate(out). The catalysed reaction is L-sepiapterin(out) + a dicarboxylate(in) = L-sepiapterin(in) + a dicarboxylate(out). It catalyses the reaction prostaglandin F2alpha(out) + a dicarboxylate(in) = prostaglandin F2alpha(in) + a dicarboxylate(out). The enzyme catalyses prostaglandin E2(out) + a dicarboxylate(in) = prostaglandin E2(in) + a dicarboxylate(out). It carries out the reaction 3',5'-cyclic AMP(out) + a dicarboxylate(in) = 3',5'-cyclic AMP(in) + a dicarboxylate(out). The catalysed reaction is 3',5'-cyclic GMP(out) + a dicarboxylate(in) = 3',5'-cyclic GMP(in) + a dicarboxylate(out). It catalyses the reaction urate(out) + a dicarboxylate(in) = urate(in) + a dicarboxylate(out). The enzyme catalyses kynurenate(out) + glutarate(in) = kynurenate(in) + glutarate(out). It carries out the reaction (indol-3-yl)acetate(out) + a dicarboxylate(in) = (indol-3-yl)acetate(in) + a dicarboxylate(out). The catalysed reaction is indoxyl sulfate(out) + a dicarboxylate(in) = indoxyl sulfate(in) + a dicarboxylate(out). It catalyses the reaction N-benzoylglycine(out) + a dicarboxylate(in) = N-benzoylglycine(in) + a dicarboxylate(out). The enzyme catalyses 3-carboxy-4-methyl-5-propyl-2-furanpropanoate(out) + a dicarboxylate(in) = 3-carboxy-4-methyl-5-propyl-2-furanpropanoate(in) + a dicarboxylate(out). Its function is as follows. Secondary active transporter that functions as a Na(+)-independent organic anion (OA)/dicarboxylate antiporter where the uptake of one molecule of OA into the cell is coupled with an efflux of one molecule of intracellular dicarboxylate such as 2-oxoglutarate or glutarate. Mediates the uptake of OA across the basolateral side of proximal tubule epithelial cells, thereby contributing to the renal elimination of endogenous OA from the systemic circulation into the urine. Functions as a biopterin transporters involved in the uptake and the secretion of coenzymes tetrahydrobiopterin (BH4), dihydrobiopterin (BH2) and sepiapterin to urine, thereby determining baseline levels of blood biopterins. Transports prostaglandin E2 (PGE2) and prostaglandin F2-alpha (PGF2-alpha) and may contribute to their renal excretion. Also mediates the uptake of cyclic nucleotides such as cAMP and cGMP. Involved in the transport of neuroactive tryptophan metabolites kynurenate (KYNA) and xanthurenate (XA) and may contribute to their secretion from the brain. May transport glutamate. Also involved in the disposition of uremic toxins and potentially toxic xenobiotics by the renal organic anion secretory pathway, helping reduce their undesired toxicological effects on the body. Uremic toxins include the indoxyl sulfate (IS), hippurate/N-benzoylglycine (HA), indole acetate (IA), 3-carboxy-4- methyl-5-propyl-2-furanpropionate (CMPF) and urate. Xenobiotics include the mycotoxin ochratoxin (OTA). May also contribute to the transport of organic compounds in testes across the blood-testis-barrier. The protein is Solute carrier family 22 member 6 of Bos taurus (Bovine).